A 479-amino-acid polypeptide reads, in one-letter code: Glutamyl-tRNA(Gln) amidotransferase subunit A (479 aa).

Catalysis depends on charge relay system residues K75 and S150. S174 functions as the Acyl-ester intermediate in the catalytic mechanism.

Belongs to the amidase family. GatA subfamily. As to quaternary structure, heterotrimer of A, B and C subunits.

It catalyses the reaction L-glutamyl-tRNA(Gln) + L-glutamine + ATP + H2O = L-glutaminyl-tRNA(Gln) + L-glutamate + ADP + phosphate + H(+). Allows the formation of correctly charged Gln-tRNA(Gln) through the transamidation of misacylated Glu-tRNA(Gln) in organisms which lack glutaminyl-tRNA synthetase. The reaction takes place in the presence of glutamine and ATP through an activated gamma-phospho-Glu-tRNA(Gln). The chain is Glutamyl-tRNA(Gln) amidotransferase subunit A from Synechococcus sp. (strain ATCC 27144 / PCC 6301 / SAUG 1402/1) (Anacystis nidulans).